The sequence spans 317 residues: Tyrosine--tRNA ligase (317 aa).

An L-tyrosine-binding site is contributed by Tyr33. A 'HIGH' region motif is present at residues 38–46 (PSGKIHMGH). The L-tyrosine site is built by Tyr155, Gln159, Asp162, and Gln177. The short motif at 211–215 (KMASS) is the 'KMSKS' region element. Residue Ser214 coordinates ATP.

This sequence belongs to the class-I aminoacyl-tRNA synthetase family. TyrS type 3 subfamily. As to quaternary structure, homodimer.

The protein resides in the cytoplasm. It carries out the reaction tRNA(Tyr) + L-tyrosine + ATP = L-tyrosyl-tRNA(Tyr) + AMP + diphosphate + H(+). Functionally, catalyzes the attachment of tyrosine to tRNA(Tyr) in a two-step reaction: tyrosine is first activated by ATP to form Tyr-AMP and then transferred to the acceptor end of tRNA(Tyr). The sequence is that of Tyrosine--tRNA ligase from Methanosarcina mazei (strain ATCC BAA-159 / DSM 3647 / Goe1 / Go1 / JCM 11833 / OCM 88) (Methanosarcina frisia).